We begin with the raw amino-acid sequence, 186 residues long: Ribosome-recycling factor (186 aa).

It belongs to the RRF family.

It is found in the cytoplasm. In terms of biological role, responsible for the release of ribosomes from messenger RNA at the termination of protein biosynthesis. May increase the efficiency of translation by recycling ribosomes from one round of translation to another. This is Ribosome-recycling factor from Rickettsia rickettsii (strain Iowa).